The primary structure comprises 289 residues: Agroclavine dehydrogenase (289 aa).

The protein belongs to the fgaFS/easG family. In terms of assembly, monomer.

It catalyses the reaction agroclavine + NADP(+) = didehydroagroclavine + NADPH + H(+). Its pathway is alkaloid biosynthesis; ergot alkaloid biosynthesis. Its function is as follows. Agroclavine dehydrogenase; part of the gene cluster that mediates the biosynthesis of fungal ergot alkaloid ergovaline, the predominant ergopeptine product in E.festucae var. lolii. DmaW catalyzes the first step of ergot alkaloid biosynthesis by condensing dimethylallyl diphosphate (DMAP) and tryptophan to form 4-dimethylallyl-L-tryptophan. The second step is catalyzed by the methyltransferase easF that methylates 4-dimethylallyl-L-tryptophan in the presence of S-adenosyl-L-methionine, resulting in the formation of 4-dimethylallyl-L-abrine. The catalase easC and the FAD-dependent oxidoreductase easE then transform 4-dimethylallyl-L-abrine to chanoclavine-I which is further oxidized by easD in the presence of NAD(+), resulting in the formation of chanoclavine-I aldehyde. Agroclavine dehydrogenase easG then mediates the conversion of chanoclavine-I aldehyde to agroclavine via a non-enzymatic adduct reaction: the substrate is an iminium intermediate that is formed spontaneously from chanoclavine-I aldehyde in the presence of glutathione. Further conversion of agroclavine to paspalic acid is a two-step process involving oxidation of agroclavine to elymoclavine and of elymoclavine to paspalic acid, the second step being performed by the elymoclavine oxidase cloA. However, cloA does not encode a functional enzyme indicating that C.fusiformis terminates its ergot alkaloid pathway at elymoclavine. The chain is Agroclavine dehydrogenase from Claviceps fusiformis (Ergot fungus).